Reading from the N-terminus, the 283-residue chain is Pantothenate synthetase (283 aa).

30 to 37 lines the ATP pocket; that stretch reads MGNLHSGH. Catalysis depends on histidine 37, which acts as the Proton donor. (R)-pantoate is bound at residue glutamine 61. Glutamine 61 is a binding site for beta-alanine. Residue 149–152 coordinates ATP; that stretch reads GEKD. Residue glutamine 155 coordinates (R)-pantoate. ATP contacts are provided by residues valine 178 and 186–189; that span reads LSSR.

Belongs to the pantothenate synthetase family. Homodimer.

Its subcellular location is the cytoplasm. It catalyses the reaction (R)-pantoate + beta-alanine + ATP = (R)-pantothenate + AMP + diphosphate + H(+). It functions in the pathway cofactor biosynthesis; (R)-pantothenate biosynthesis; (R)-pantothenate from (R)-pantoate and beta-alanine: step 1/1. Functionally, catalyzes the condensation of pantoate with beta-alanine in an ATP-dependent reaction via a pantoyl-adenylate intermediate. This chain is Pantothenate synthetase, found in Pseudomonas savastanoi pv. phaseolicola (strain 1448A / Race 6) (Pseudomonas syringae pv. phaseolicola (strain 1448A / Race 6)).